Here is a 53-residue protein sequence, read N- to C-terminus: Non-classical export protein 1 (53 aa).

Residues 7–29 form a helical membrane-spanning segment; it reads FLLGKFSDPLLAIMVGCLSYYVY.

This sequence belongs to the NCE101 family.

The protein resides in the membrane. Involved in a novel pathway of export of proteins that lack a cleavable signal sequence. May be part of the export machinery or may also be a substrate for non-classical export. The protein is Non-classical export protein 1 (NCE101) of Saccharomyces cerevisiae (strain ATCC 204508 / S288c) (Baker's yeast).